The chain runs to 270 residues: Diaminopimelate epimerase (270 aa).

The substrate site is built by Asn15, Gln49, and Asn66. Catalysis depends on Cys75, which acts as the Proton donor. Substrate is bound by residues 76–77 (GN), Asn155, Asn187, and 204–205 (ER). The active-site Proton acceptor is the Cys213. 214–215 (GS) contacts substrate.

The protein belongs to the diaminopimelate epimerase family. As to quaternary structure, homodimer.

Its subcellular location is the cytoplasm. The enzyme catalyses (2S,6S)-2,6-diaminopimelate = meso-2,6-diaminopimelate. Its pathway is amino-acid biosynthesis; L-lysine biosynthesis via DAP pathway; DL-2,6-diaminopimelate from LL-2,6-diaminopimelate: step 1/1. In terms of biological role, catalyzes the stereoinversion of LL-2,6-diaminopimelate (L,L-DAP) to meso-diaminopimelate (meso-DAP), a precursor of L-lysine and an essential component of the bacterial peptidoglycan. This is Diaminopimelate epimerase from Rickettsia typhi (strain ATCC VR-144 / Wilmington).